We begin with the raw amino-acid sequence, 339 residues long: Large ribosomal subunit protein uL10 (339 aa).

The segment at threonine 305–glycine 339 is disordered. A compositionally biased stretch (acidic residues) spans lysine 312 to alanine 330.

This sequence belongs to the universal ribosomal protein uL10 family. As to quaternary structure, part of the 50S ribosomal subunit. Forms part of the ribosomal stalk which helps the ribosome interact with GTP-bound translation factors. Forms a heptameric L10(L12)2(L12)2(L12)2 complex, where L10 forms an elongated spine to which the L12 dimers bind in a sequential fashion.

Functionally, forms part of the ribosomal stalk, playing a central role in the interaction of the ribosome with GTP-bound translation factors. The chain is Large ribosomal subunit protein uL10 from Thermococcus onnurineus (strain NA1).